The primary structure comprises 256 residues: Small ribosomal subunit protein uS2 (256 aa).

The protein belongs to the universal ribosomal protein uS2 family.

The polypeptide is Small ribosomal subunit protein uS2 (Streptococcus agalactiae serotype Ia (strain ATCC 27591 / A909 / CDC SS700)).